The chain runs to 155 residues: RNA pyrophosphohydrolase (155 aa).

Positions 6–148 (GYRANVAIVL…KQDVYRRALT (143 aa)) constitute a Nudix hydrolase domain. The Nudix box signature appears at 38 to 59 (GGVATGETPLQAMYRELYEEVG).

Belongs to the Nudix hydrolase family. RppH subfamily. It depends on a divalent metal cation as a cofactor.

Accelerates the degradation of transcripts by removing pyrophosphate from the 5'-end of triphosphorylated RNA, leading to a more labile monophosphorylated state that can stimulate subsequent ribonuclease cleavage. This Francisella philomiragia subsp. philomiragia (strain ATCC 25017 / CCUG 19701 / FSC 153 / O#319-036) protein is RNA pyrophosphohydrolase.